The primary structure comprises 248 residues: Tyrosine recombinase XerD-like (248 aa).

The region spanning 1-72 (MKSYIEPFIA…TANQFLYYLY (72 aa)) is the Core-binding (CB) domain. One can recognise a Tyr recombinase domain in the interval 85-248 (DTMKVMRTEK…PVTLEKYYKS (164 aa)). Catalysis depends on residues lysine 149 and arginine 213. The active-site O-(3'-phospho-DNA)-tyrosine intermediate is the tyrosine 245.

The protein belongs to the 'phage' integrase family. XerD-like subfamily.

Its subcellular location is the cytoplasm. Putative tyrosine recombinase. Not involved in the cutting and rejoining of the recombining DNA molecules on dif(SL) site. The chain is Tyrosine recombinase XerD-like from Streptococcus pyogenes serotype M4 (strain MGAS10750).